Here is a 538-residue protein sequence, read N- to C-terminus: MSFRFDRSVFESADFNERLRERLTGALNPKSRRHVERADEAGNEDDSSGHQRKSGGSLDILKNDIIVEKVDFSRIPNLEILDLDVGLGVSSISSGGGGSSMMKGICKISIEGAMLQVRTVIESNLLMLSMADSPEFVTPTLITNDSFSLPITMTFSNIKMEAISKVFFVARNSGIGISFDDVVLDFKFDCSIKILQTTIEKRLKRAMELLFKDTLPTALFNMSQSWFTNSDGSRSSAKHKKDTCDENNQPSAPKIIFEDADLQELSPANMLRLSTLVSSRQTLSLHSTVSSTLSLIPGCLERQNLYRFISRMPSLSNYYSSYVDHKKERAGTPSLLMNKRPSVDYLLRRSSSSGNSLMSSQAYFDKESNLLPMEVLEENAYDLDVITDIQNKLYMRSTDHDEQVNHTKPRRRKIKIGKNKKDKPAYKEEIEQQEPVQSTITVSMPFEEPQIIIEHNDETEAVKEERESVLSSPKLIRSTMDKTYTNSRILNTLLQKNGNLLDEETRLRAQSIDSVAHTKMGYLLGLNHIATPPPPPYY.

An SMP-LTD domain is found at Met-1 to Gln-224. Disordered regions lie at residues Ala-26–Gly-55 and Asp-231–Ser-251.

The protein belongs to the MDM34 family. Component of the ER-mitochondria encounter structure (ERMES) or MDM complex, composed of MMM1, MDM10, MDM12 and MDM34.

The protein resides in the mitochondrion outer membrane. Component of the ERMES/MDM complex, which serves as a molecular tether to connect the endoplasmic reticulum (ER) and mitochondria. Components of this complex are involved in the control of mitochondrial shape and protein biogenesis, and function in nonvesicular lipid trafficking between the ER and mitochondria. MDM34 is required for the interaction of the ER-resident membrane protein MMM1 and the outer mitochondrial membrane-resident beta-barrel protein MDM10. The sequence is that of Mitochondrial distribution and morphology protein 34 from Candida glabrata (strain ATCC 2001 / BCRC 20586 / JCM 3761 / NBRC 0622 / NRRL Y-65 / CBS 138) (Yeast).